The sequence spans 95 residues: Large ribosomal subunit protein bL25 (95 aa).

It belongs to the bacterial ribosomal protein bL25 family. In terms of assembly, part of the 50S ribosomal subunit; part of the 5S rRNA/L5/L18/L25 subcomplex. Contacts the 5S rRNA. Binds to the 5S rRNA independently of L5 and L18.

This is one of the proteins that binds to the 5S RNA in the ribosome where it forms part of the central protuberance. The protein is Large ribosomal subunit protein bL25 of Shewanella baltica (strain OS223).